A 550-amino-acid polypeptide reads, in one-letter code: Cochlin (550 aa).

The N-terminal stretch at 1-24 (MWASWIPVLCLGVCLLLPPEPVGS) is a signal peptide. The region spanning 28–121 (VPIPITCSTR…QMLSRWSASF (94 aa)) is the LCCL domain. 2 disulfides stabilise this stretch: cysteine 34–cysteine 50 and cysteine 54–cysteine 74. N-linked (GlcNAc...) asparagine glycosylation occurs at asparagine 100. Polar residues predominate over residues 128-139 (SGTQEATGQAVS). Residues 128–158 (SGTQEATGQAVSTAHPATGKRLKKTPEKKTG) form a disordered region. 2 VWFA domains span residues 165–350 (DIAF…VQKL) and 367–537 (NIAF…VSDV). Asparagine 221 and asparagine 436 each carry an N-linked (GlcNAc...) asparagine glycan.

Monomer. May form homodimer. Interacts with type II collagen. Interacts with SLC44A2. Interacts with ANXA2. In terms of processing, N-glycosylated.

The protein localises to the secreted. It is found in the extracellular space. Functionally, plays a role in the control of cell shape and motility in the trabecular meshwork. This chain is Cochlin (COCH), found in Bos taurus (Bovine).